The sequence spans 1220 residues: Plasma membrane calcium-transporting ATPase 1 (1220 aa).

Gly-2 is subject to N-acetylglycine. The Cytoplasmic portion of the chain corresponds to 2–105; it reads GDMANNSVVY…KTFLQLVWEA (104 aa). Phosphoserine is present on residues Ser-8 and Ser-17. A helical membrane pass occupies residues 106–126; the sequence is LQDVTLIILEIAAIVSLGLSF. At 127 to 154 the chain is on the extracellular side; it reads YQPPEGDNALCGEVSVGEEEGEGETGWI. The chain crosses the membrane as a helical span at residues 155 to 175; that stretch reads EGAAILLSVVCVVLVTAFNDW. Residues 176–366 lie on the Cytoplasmic side of the membrane; sequence SKEKQFRGLQ…KEKSVLQGKL (191 aa). The disordered stretch occupies residues 297-356; that stretch reads EEEKKDEKKKEKKNKKQDGAIENRNKAKAQDGEPMEMQPLKSEEGGDGDEKDKKKANLPK. Composition is skewed to basic and acidic residues over residues 312-327 and 337-356; these read KQDG…KAQD and KSEE…NLPK. At Ser-338 the chain carries Phosphoserine. A helical membrane pass occupies residues 367-386; sequence TKLAVQIGKAGLLMSAITVI. Residues 387–418 are Extracellular-facing; the sequence is ILVLYFLIDTFWVQKRPWLAECTPIYIQYFVK. The helical transmembrane segment at 419–439 threads the bilayer; the sequence is FFIIGVTVLVVAVPEGLPLPV. The Cytoplasmic portion of the chain corresponds to 440-855; sequence TISLAYSVNE…RNVYDSISKF (416 aa). Asp-475 (4-aspartylphosphate intermediate) is an active-site residue. The Mg(2+) site is built by Asp-475, Thr-477, and Asp-797. The helical transmembrane segment at 856 to 876 threads the bilayer; that stretch reads LQFQLTVNVVAVIVAFTGACI. At 877 to 882 the chain is on the extracellular side; sequence TQDSPL. A helical transmembrane segment spans residues 883 to 903; the sequence is KAVQMLWVNLIMDTLASLALA. The Cytoplasmic portion of the chain corresponds to 904–927; the sequence is TEPPTESLLLGKPYGRNKPLISRT. The helical transmembrane segment at 928-948 threads the bilayer; the sequence is MMKNILGHAFYQLVVVFTLLL. The Extracellular portion of the chain corresponds to 949–971; the sequence is AGEKFFDIDSGRNAPLHAPPSEH. The chain crosses the membrane as a helical span at residues 972 to 991; sequence YTIVFNIFVLMQLFNEINAR. The Cytoplasmic segment spans residues 992–1005; that stretch reads KIHGERNVFEGIFN. Residues 1006–1027 form a helical membrane-spanning segment; sequence NAIFCTIVLGTFVVQIIIVQFA. Over 1028–1039 the chain is Extracellular; that stretch reads GKPFSCSELSVE. Residues 1040 to 1060 form a helical membrane-spanning segment; it reads QWLWSIFLGMGTLLWGQLIST. The Cytoplasmic segment spans residues 1061-1220; sequence IPTSRLKFQK…SPLHSLETSL (160 aa). A calmodulin-binding subdomain A region spans residues 1100–1117; sequence LRRWQILWFRGLNRIQTQ. Residue Thr-1116 is modified to Phosphothreonine; by PKC. Residues 1118–1220 form a required for basolateral membrane targeting region; sequence IRVVNAFRSS…SPLHSLETSL (103 aa). Residues Ser-1140 and Ser-1155 each carry the phosphoserine modification. Residues 1160–1220 are disordered; the sequence is PLIDDTDAED…SPLHSLETSL (61 aa). Thr-1165 carries the phosphothreonine modification. Ser-1177 is subject to Phosphoserine; by PKA. Phosphoserine occurs at positions 1178 and 1182. Polar residues predominate over residues 1200–1220; that stretch reads MNKSATSSSPGSPLHSLETSL.

The protein belongs to the cation transport ATPase (P-type) (TC 3.A.3) family. Type IIB subfamily. In terms of assembly, monomer. Dimer. Oligomer. Calmodulin binding. Interacts with PDZD11. Interacts with SLC35G1 and STIM1. Interacts with YWHAE; interacts with the monomeric and dimeric forms of the YWHAE but prefer the monomer form; this interaction inhibits calcium-transporting ATPase activity. Interacts with NPTN; this interaction stabilizes ATP2B1 and increases ATPase activity; this interaction controls T cell calcium homeostasis following T cell activation. Interacts with EPB41; regulates small intestinal calcium absorption through regulation of membrane expression of ATP2B1. In terms of tissue distribution, isoform B is ubiquitously expressed and is the most predominant isoform. Isoform C is expressed at much lower levels in all tissues tested, but liver, while isoform A is found only in aorta, brain and stomach.

It is found in the cell membrane. It localises to the basolateral cell membrane. The protein localises to the synapse. The protein resides in the presynaptic cell membrane. Its subcellular location is the cytoplasmic vesicle. It is found in the secretory vesicle. It localises to the synaptic vesicle membrane. The enzyme catalyses Ca(2+)(in) + ATP + H2O = Ca(2+)(out) + ADP + phosphate + H(+). Catalyzes the hydrolysis of ATP coupled with the transport of calcium from the cytoplasm to the extracellular space thereby maintaining intracellular calcium homeostasis. Plays a role in blood pressure regulation through regulation of intracellular calcium concentration and nitric oxide production leading to regulation of vascular smooth muscle cells vasoconstriction. Positively regulates bone mineralization through absorption of calcium from the intestine. Plays dual roles in osteoclast differentiation and survival by regulating RANKL-induced calcium oscillations in preosteoclasts and mediating calcium extrusion in mature osteoclasts. Regulates insulin sensitivity through calcium/calmodulin signaling pathway by regulating AKT1 activation and NOS3 activation in endothelial cells. May play a role in synaptic transmission by modulating calcium and proton dynamics at the synaptic vesicles. The polypeptide is Plasma membrane calcium-transporting ATPase 1 (Oryctolagus cuniculus (Rabbit)).